The following is a 145-amino-acid chain: Large ribosomal subunit protein uL15 (145 aa).

The disordered stretch occupies residues 1–54 (MKLNELKYTPGSKKEATRVGRGMASGKGKTATRGHKGQNSRSGGGVRPGFEGGQ). Over residues 42 to 52 (SGGGVRPGFEG) the composition is skewed to gly residues.

The protein belongs to the universal ribosomal protein uL15 family. In terms of assembly, part of the 50S ribosomal subunit.

Its function is as follows. Binds to the 23S rRNA. The protein is Large ribosomal subunit protein uL15 of Mycoplasma capricolum subsp. capricolum (strain California kid / ATCC 27343 / NCTC 10154).